A 319-amino-acid chain; its full sequence is DNA-directed RNA polymerase subunit alpha (319 aa).

An alpha N-terminal domain (alpha-NTD) region spans residues 1–227; it reads MKEFIFPMKI…KHMNMLTNIS (227 aa). Residues 242 to 319 form an alpha C-terminal domain (alpha-CTD) region; it reads LMEKLTFSIE…NIGEQRSSEV (78 aa).

It belongs to the RNA polymerase alpha chain family. In terms of assembly, homodimer. The RNAP catalytic core consists of 2 alpha, 1 beta, 1 beta' and 1 omega subunit. When a sigma factor is associated with the core the holoenzyme is formed, which can initiate transcription.

The catalysed reaction is RNA(n) + a ribonucleoside 5'-triphosphate = RNA(n+1) + diphosphate. In terms of biological role, DNA-dependent RNA polymerase catalyzes the transcription of DNA into RNA using the four ribonucleoside triphosphates as substrates. This Hydrogenobaculum sp. (strain Y04AAS1) protein is DNA-directed RNA polymerase subunit alpha.